The primary structure comprises 361 residues: D-alanine--D-alanine ligase (361 aa).

The ATP-grasp domain maps to 134–344 (KILAQRAGVP…YTDLITKLID (211 aa)). 169 to 224 (ASQLGSDLFVKPSNQGSSVGVSHVTNEKEYKVALAEAFKYDDKVLVEETVHGTEVE) lines the ATP pocket. Residues aspartate 297, glutamate 311, and asparagine 313 each contribute to the Mg(2+) site.

It belongs to the D-alanine--D-alanine ligase family. Mg(2+) serves as cofactor. Requires Mn(2+) as cofactor.

The protein resides in the cytoplasm. It catalyses the reaction 2 D-alanine + ATP = D-alanyl-D-alanine + ADP + phosphate + H(+). The protein operates within cell wall biogenesis; peptidoglycan biosynthesis. Cell wall formation. The polypeptide is D-alanine--D-alanine ligase (Lactobacillus gasseri (strain ATCC 33323 / DSM 20243 / BCRC 14619 / CIP 102991 / JCM 1131 / KCTC 3163 / NCIMB 11718 / NCTC 13722 / AM63)).